Here is a 514-residue protein sequence, read N- to C-terminus: Maturase K (514 aa).

This sequence belongs to the intron maturase 2 family. MatK subfamily.

The protein localises to the plastid. The protein resides in the chloroplast. Functionally, usually encoded in the trnK tRNA gene intron. Probably assists in splicing its own and other chloroplast group II introns. The chain is Maturase K from Dioon spinulosum (Gum palm).